We begin with the raw amino-acid sequence, 310 residues long: Proline iminopeptidase (310 aa).

The AB hydrolase-1 domain occupies P33 to F290. Catalysis depends on S107, which acts as the Nucleophile. Residue D260 is part of the active site. The Proton donor role is filled by H287.

The protein belongs to the peptidase S33 family.

It is found in the cytoplasm. The enzyme catalyses Release of N-terminal proline from a peptide.. In terms of biological role, specifically catalyzes the removal of N-terminal proline residues from peptides. The sequence is that of Proline iminopeptidase (pip) from Neisseria meningitidis serogroup B (strain ATCC BAA-335 / MC58).